The chain runs to 37 residues: GIFSLVKGVAKLAGKTLAKEGGKFGLELAMCKIAKQC.

C31 and C37 are joined by a disulfide.

In terms of tissue distribution, expressed by the skin glands.

The protein resides in the secreted. Functionally, antimicrobial peptide. This Pelophylax ridibundus (Marsh frog) protein is Esculentin-2Rb.